A 376-amino-acid chain; its full sequence is Probable allantoicase (376 aa).

The protein belongs to the allantoicase family.

The catalysed reaction is allantoate + H2O = (S)-ureidoglycolate + urea. The protein operates within nitrogen metabolism; (S)-allantoin degradation; (S)-ureidoglycolate from allantoate (aminidohydrolase route): step 1/1. The polypeptide is Probable allantoicase (Streptomyces avermitilis (strain ATCC 31267 / DSM 46492 / JCM 5070 / NBRC 14893 / NCIMB 12804 / NRRL 8165 / MA-4680)).